The primary structure comprises 337 residues: Glyceraldehyde-3-phosphate dehydrogenase (337 aa).

Residues 13 to 14 (RI), Asp-35, and Arg-80 contribute to the NAD(+) site. D-glyceraldehyde 3-phosphate is bound by residues 151 to 153 (SCT), Thr-182, 211 to 212 (TG), and Arg-234. Cys-152 (nucleophile) is an active-site residue. Asn-316 is a binding site for NAD(+).

This sequence belongs to the glyceraldehyde-3-phosphate dehydrogenase family. As to quaternary structure, homotetramer.

The protein resides in the cytoplasm. The enzyme catalyses D-glyceraldehyde 3-phosphate + phosphate + NAD(+) = (2R)-3-phospho-glyceroyl phosphate + NADH + H(+). It participates in carbohydrate degradation; glycolysis; pyruvate from D-glyceraldehyde 3-phosphate: step 1/5. This is Glyceraldehyde-3-phosphate dehydrogenase (GPD1) from Monascus purpureus (Red mold).